The primary structure comprises 444 residues: ATP-dependent protease ATPase subunit HslU (444 aa).

Residues Ile-18 and 60–65 contribute to the ATP site; that span reads GVGKTE. Residues 141 to 161 form a disordered region; that stretch reads DAWGNNEEGNNDSGTRQSFRK. A compositionally biased stretch (polar residues) spans 147–157; the sequence is EEGNNDSGTRQ. Residues Asp-257, Glu-322, and Arg-394 each contribute to the ATP site.

This sequence belongs to the ClpX chaperone family. HslU subfamily. As to quaternary structure, a double ring-shaped homohexamer of HslV is capped on each side by a ring-shaped HslU homohexamer. The assembly of the HslU/HslV complex is dependent on binding of ATP.

It is found in the cytoplasm. Its function is as follows. ATPase subunit of a proteasome-like degradation complex; this subunit has chaperone activity. The binding of ATP and its subsequent hydrolysis by HslU are essential for unfolding of protein substrates subsequently hydrolyzed by HslV. HslU recognizes the N-terminal part of its protein substrates and unfolds these before they are guided to HslV for hydrolysis. In Aliivibrio fischeri (strain ATCC 700601 / ES114) (Vibrio fischeri), this protein is ATP-dependent protease ATPase subunit HslU.